The chain runs to 358 residues: DNA replication and repair protein RecF (358 aa).

30-37 is an ATP binding site; it reads GANGSGKT.

The protein belongs to the RecF family.

The protein resides in the cytoplasm. Functionally, the RecF protein is involved in DNA metabolism; it is required for DNA replication and normal SOS inducibility. RecF binds preferentially to single-stranded, linear DNA. It also seems to bind ATP. The sequence is that of DNA replication and repair protein RecF from Edwardsiella ictaluri (strain 93-146).